We begin with the raw amino-acid sequence, 345 residues long: L-threonine 3-dehydrogenase (345 aa).

Cys-42 lines the Zn(2+) pocket. Active-site charge relay system residues include Thr-44 and His-47. Residues His-67, Glu-68, Cys-97, Cys-100, Cys-103, and Cys-111 each contribute to the Zn(2+) site. NAD(+) contacts are provided by residues Ile-179, Asp-199, Arg-204, 266–268 (LGI), and 290–291 (IY).

This sequence belongs to the zinc-containing alcohol dehydrogenase family. As to quaternary structure, homotetramer. Zn(2+) serves as cofactor.

The protein resides in the cytoplasm. The enzyme catalyses L-threonine + NAD(+) = (2S)-2-amino-3-oxobutanoate + NADH + H(+). The protein operates within amino-acid degradation; L-threonine degradation via oxydo-reductase pathway; glycine from L-threonine: step 1/2. Its function is as follows. Catalyzes the NAD(+)-dependent oxidation of L-threonine to 2-amino-3-ketobutyrate. This chain is L-threonine 3-dehydrogenase, found in Rhizobium rhizogenes (strain K84 / ATCC BAA-868) (Agrobacterium radiobacter).